A 338-amino-acid polypeptide reads, in one-letter code: Large ribosomal subunit protein uL10 (338 aa).

The disordered stretch occupies residues 297–338 (PSAQQTQTQQSTAEEKKEEKKEEEKKGPSEEEIGSGLASLFG). The span at 298 to 308 (SAQQTQTQQST) shows a compositional bias: low complexity. Basic and acidic residues predominate over residues 309–325 (AEEKKEEKKEEEKKGPS).

Belongs to the universal ribosomal protein uL10 family. In terms of assembly, part of the 50S ribosomal subunit. Forms part of the ribosomal stalk which helps the ribosome interact with GTP-bound translation factors. Forms a heptameric L10(L12)2(L12)2(L12)2 complex, where L10 forms an elongated spine to which the L12 dimers bind in a sequential fashion.

In terms of biological role, forms part of the ribosomal stalk, playing a central role in the interaction of the ribosome with GTP-bound translation factors. The chain is Large ribosomal subunit protein uL10 from Saccharolobus islandicus (strain M.14.25 / Kamchatka #1) (Sulfolobus islandicus).